The primary structure comprises 1087 residues: A-kinase anchor protein 9 (1087 aa).

The stretch at 5–461 forms a coiled coil; sequence EVQCQAEKVR…REREKMERIQ (457 aa). The interval 559 to 572 is PKA-RII subunit binding domain; the sequence is SLQKVLEEKVAAAL. A coiled-coil region spans residues 614–773; that stretch reads MESDVSALTW…SEKEDKTEVQ (160 aa). Residues 667–685 are compositionally biased toward basic and acidic residues; the sequence is VQDSETKQRERERQSRLHG. The disordered stretch occupies residues 667–691; sequence VQDSETKQRERERQSRLHGDLGVLE.

Interacts with the regulatory region of protein kinase N (PKN), protein phosphatase 2A (PP2A), protein phosphatase 1 (PP1) and the immature non-phosphorylated form of PKC epsilon. Interacts with CIP4 and FNBP1. Interacts with chloride intracellular channel proteins CLIC1, CLIC4 and CLIC5. CSNK1D binding promotes its centrosomal subcellular location. Interacts with GM130/GOLGA2; leading to recruitment to the Golgi apparatus. Interacts with KCNQ1; targets protein kinase A (PKA) catalytic and regulatory subunits and protein phosphatase 1 (PP1), to the heterodimer KCNQ1-KCNE1. Interacts with PDE4DIP; this interaction stabilizes both proteins. In complex with PDE4DIP, recruits CAMSAP2 to the Golgi apparatus. Forms a pericentrosomal complex with CDK5RAP2, EB1/MAPRE1 and PDE4DIP; within this complex, MAPRE1 binding to CDK5RAP2 may be mediated by PDE4DIP. The interaction with PDE4DIP is isoform-specific. Interacts with MAPRE1 and MAPRE3. Interacts (via C-terminus) with CAMSAP2; this interaction is much stronger in the presence of PDE4DIP. Interacts with CAMSAP3. Interacts (via C-terminus) with the gamma-tubulin ring complex (gamma-TuRC), composed of gamma-tubulin, TUBGCP2, TUBGCP3, TUBGCP4, TUBGCP5 and TUBGCP6. As to expression, highly expressed in gastric parietal cells.

The protein localises to the golgi apparatus. The protein resides in the cytoplasm. Its subcellular location is the cytoskeleton. It localises to the microtubule organizing center. It is found in the centrosome. Its function is as follows. Scaffolding protein that assembles several protein kinases and phosphatases on the centrosome and Golgi apparatus. Required to maintain the integrity of the Golgi apparatus. Required for microtubule nucleation at the cis-side of the Golgi apparatus. Required for association of the centrosomes with the poles of the bipolar mitotic spindle during metaphase. In complex with PDE4DIP, recruits CAMSAP2 to the Golgi apparatus and tethers non-centrosomal minus-end microtubules to the Golgi, an important step for polarized cell movement. In complex with PDE4DIP, EB1/MAPRE1 and CDK5RAP2, contributes to microtubules nucleation and extension also from the centrosome to the cell periphery. The interaction with PDE4DIP is isoform-specific. The polypeptide is A-kinase anchor protein 9 (AKAP9) (Oryctolagus cuniculus (Rabbit)).